The sequence spans 383 residues: UDP-N-acetylenolpyruvoylglucosamine reductase (383 aa).

The FAD-binding PCMH-type domain maps to 42–212 (LSCQAMQLIT…TRVGFKLHKD (171 aa)). Arg189 is a catalytic residue. The active-site Proton donor is Ser267. Glu369 is a catalytic residue.

It belongs to the MurB family. FAD serves as cofactor.

It localises to the cytoplasm. The catalysed reaction is UDP-N-acetyl-alpha-D-muramate + NADP(+) = UDP-N-acetyl-3-O-(1-carboxyvinyl)-alpha-D-glucosamine + NADPH + H(+). It functions in the pathway cell wall biogenesis; peptidoglycan biosynthesis. In terms of biological role, cell wall formation. The sequence is that of UDP-N-acetylenolpyruvoylglucosamine reductase from Psychrobacter sp. (strain PRwf-1).